A 264-amino-acid polypeptide reads, in one-letter code: MSFLQEINLKLDVFEGPLDLLLHLIQKLEIDIYDIPITAVTEQYMSYIHAMQTLELEVAGEYLVMAATLMAIKSQMLLPKQELEIIDDEDFFEEEDPREALVAQLLEYRKFKYAATVLHEKEEERKLYYTKEPMDMDDYKEEDTTLPPNQINTIDLFLAFHAMLEKKKNRQPVETTVASDDVSIEEKISAISERMRQVQKGKAVSFDSFFDSYSKQEIVTTFMALLELMKTGAIYAEQENNYSEILLFNTETQQEDTTEVEETQ.

The protein belongs to the ScpA family. Component of a cohesin-like complex composed of ScpA, ScpB and the Smc homodimer, in which ScpA and ScpB bind to the head domain of Smc. The presence of the three proteins is required for the association of the complex with DNA.

It is found in the cytoplasm. In terms of biological role, participates in chromosomal partition during cell division. May act via the formation of a condensin-like complex containing Smc and ScpB that pull DNA away from mid-cell into both cell halves. The sequence is that of Segregation and condensation protein A from Enterococcus faecalis (strain ATCC 700802 / V583).